We begin with the raw amino-acid sequence, 166 residues long: ATP synthase subunit b (166 aa).

Residues 10–30 (LLFWMIVSFGIVFVILSKYGF) form a helical membrane-spanning segment.

It belongs to the ATPase B chain family. F-type ATPases have 2 components, F(1) - the catalytic core - and F(0) - the membrane proton channel. F(1) has five subunits: alpha(3), beta(3), gamma(1), delta(1), epsilon(1). F(0) has three main subunits: a(1), b(2) and c(10-14). The alpha and beta chains form an alternating ring which encloses part of the gamma chain. F(1) is attached to F(0) by a central stalk formed by the gamma and epsilon chains, while a peripheral stalk is formed by the delta and b chains.

It is found in the cell inner membrane. F(1)F(0) ATP synthase produces ATP from ADP in the presence of a proton or sodium gradient. F-type ATPases consist of two structural domains, F(1) containing the extramembraneous catalytic core and F(0) containing the membrane proton channel, linked together by a central stalk and a peripheral stalk. During catalysis, ATP synthesis in the catalytic domain of F(1) is coupled via a rotary mechanism of the central stalk subunits to proton translocation. Functionally, component of the F(0) channel, it forms part of the peripheral stalk, linking F(1) to F(0). The protein is ATP synthase subunit b of Parabacteroides distasonis (strain ATCC 8503 / DSM 20701 / CIP 104284 / JCM 5825 / NCTC 11152).